The chain runs to 173 residues: Photosystem I assembly protein Ycf3 (173 aa).

TPR repeat units lie at residues 35 to 68 (AYVY…EENP), 72 to 105 (GETL…NPKQ), and 120 to 153 (GRTA…NPGG).

The protein belongs to the Ycf3 family.

The protein localises to the cellular thylakoid membrane. Essential for the assembly of the photosystem I (PSI) complex. May act as a chaperone-like factor to guide the assembly of the PSI subunits. This is Photosystem I assembly protein Ycf3 from Synechococcus sp. (strain WH7803).